Here is a 197-residue protein sequence, read N- to C-terminus: Transposon Tn10 TetC protein (197 aa).

Residues 12-72 (KSTYQSLVNS…ACYKQQLIMI (61 aa)) enclose the HTH tetR-type domain. A DNA-binding region (H-T-H motif) is located at residues 35–54 (SIDEISGKALVTKGAFYHHF).

In Escherichia coli, this protein is Transposon Tn10 TetC protein (tetC).